A 213-amino-acid chain; its full sequence is ATP phosphoribosyltransferase (213 aa).

This sequence belongs to the ATP phosphoribosyltransferase family. Short subfamily. As to quaternary structure, heteromultimer composed of HisG and HisZ subunits.

The protein resides in the cytoplasm. The catalysed reaction is 1-(5-phospho-beta-D-ribosyl)-ATP + diphosphate = 5-phospho-alpha-D-ribose 1-diphosphate + ATP. The protein operates within amino-acid biosynthesis; L-histidine biosynthesis; L-histidine from 5-phospho-alpha-D-ribose 1-diphosphate: step 1/9. In terms of biological role, catalyzes the condensation of ATP and 5-phosphoribose 1-diphosphate to form N'-(5'-phosphoribosyl)-ATP (PR-ATP). Has a crucial role in the pathway because the rate of histidine biosynthesis seems to be controlled primarily by regulation of HisG enzymatic activity. The protein is ATP phosphoribosyltransferase of Crocosphaera subtropica (strain ATCC 51142 / BH68) (Cyanothece sp. (strain ATCC 51142)).